Consider the following 498-residue polypeptide: ATP synthase subunit beta, chloroplastic (498 aa).

Thr6 carries the post-translational modification Phosphothreonine. Position 13 is a phosphoserine (Ser13). 172 to 179 (GGAGVGKT) provides a ligand contact to ATP.

It belongs to the ATPase alpha/beta chains family. As to quaternary structure, F-type ATPases have 2 components, CF(1) - the catalytic core - and CF(0) - the membrane proton channel. CF(1) has five subunits: alpha(3), beta(3), gamma(1), delta(1), epsilon(1). CF(0) has four main subunits: a(1), b(1), b'(1) and c(9-12).

It is found in the plastid. The protein resides in the chloroplast thylakoid membrane. The catalysed reaction is ATP + H2O + 4 H(+)(in) = ADP + phosphate + 5 H(+)(out). Functionally, produces ATP from ADP in the presence of a proton gradient across the membrane. The catalytic sites are hosted primarily by the beta subunits. The chain is ATP synthase subunit beta, chloroplastic from Olimarabidopsis pumila (Dwarf rocket).